The sequence spans 562 residues: uncharacterized protein (562 aa).

This is an uncharacterized protein from Escherichia coli (strain K12).